Reading from the N-terminus, the 395-residue chain is 1-deoxy-D-xylulose 5-phosphate reductoisomerase (395 aa).

NADPH-binding residues include Thr-13, Gly-14, Ser-15, Ile-16, Lys-40, and Asn-127. Lys-128 is a binding site for 1-deoxy-D-xylulose 5-phosphate. Glu-129 contributes to the NADPH binding site. Asp-153 serves as a coordination point for Mn(2+). 1-deoxy-D-xylulose 5-phosphate-binding residues include Ser-154, Glu-155, Ser-184, and His-207. Glu-155 serves as a coordination point for Mn(2+). Residue Gly-213 coordinates NADPH. Residues Ser-220, Asn-225, Lys-226, and Glu-229 each coordinate 1-deoxy-D-xylulose 5-phosphate. Glu-229 lines the Mn(2+) pocket.

This sequence belongs to the DXR family. Mg(2+) serves as cofactor. Mn(2+) is required as a cofactor.

It catalyses the reaction 2-C-methyl-D-erythritol 4-phosphate + NADP(+) = 1-deoxy-D-xylulose 5-phosphate + NADPH + H(+). Its pathway is isoprenoid biosynthesis; isopentenyl diphosphate biosynthesis via DXP pathway; isopentenyl diphosphate from 1-deoxy-D-xylulose 5-phosphate: step 1/6. Functionally, catalyzes the NADPH-dependent rearrangement and reduction of 1-deoxy-D-xylulose-5-phosphate (DXP) to 2-C-methyl-D-erythritol 4-phosphate (MEP). This chain is 1-deoxy-D-xylulose 5-phosphate reductoisomerase, found in Nitrosospira multiformis (strain ATCC 25196 / NCIMB 11849 / C 71).